Consider the following 163-residue polypeptide: Putative 4-hydroxy-4-methyl-2-oxoglutarate aldolase (163 aa).

Substrate contacts are provided by residues Gly76 to Leu79 and Arg98. A divalent metal cation is bound at residue Asp99.

Belongs to the class II aldolase/RraA-like family. In terms of assembly, homotrimer. A divalent metal cation is required as a cofactor.

The catalysed reaction is 4-hydroxy-4-methyl-2-oxoglutarate = 2 pyruvate. It carries out the reaction oxaloacetate + H(+) = pyruvate + CO2. Functionally, catalyzes the aldol cleavage of 4-hydroxy-4-methyl-2-oxoglutarate (HMG) into 2 molecules of pyruvate. Also contains a secondary oxaloacetate (OAA) decarboxylase activity due to the common pyruvate enolate transition state formed following C-C bond cleavage in the retro-aldol and decarboxylation reactions. This Pseudomonas fluorescens (strain ATCC BAA-477 / NRRL B-23932 / Pf-5) protein is Putative 4-hydroxy-4-methyl-2-oxoglutarate aldolase.